A 354-amino-acid chain; its full sequence is Uroporphyrinogen decarboxylase (354 aa).

Residues 30–34, F49, D79, Y156, S211, and H326 each bind substrate; that span reads RQAGR.

The protein belongs to the uroporphyrinogen decarboxylase family. In terms of assembly, homodimer.

The protein localises to the cytoplasm. The enzyme catalyses uroporphyrinogen III + 4 H(+) = coproporphyrinogen III + 4 CO2. Its pathway is porphyrin-containing compound metabolism; protoporphyrin-IX biosynthesis; coproporphyrinogen-III from 5-aminolevulinate: step 4/4. Functionally, catalyzes the decarboxylation of four acetate groups of uroporphyrinogen-III to yield coproporphyrinogen-III. The chain is Uroporphyrinogen decarboxylase from Salinibacter ruber (strain DSM 13855 / M31).